A 356-amino-acid chain; its full sequence is Heparan sulfate 2-O-sulfotransferase 1 (356 aa).

The Cytoplasmic portion of the chain corresponds to 1 to 11 (MGLLRIMMPPK). A helical; Signal-anchor for type II membrane protein membrane pass occupies residues 12–28 (LQLLAVVAFAVAMLFLE). The stretch at 24–51 (MLFLENQIQKLEESRSKLERAIARHEVR) forms a coiled coil. The Lumenal portion of the chain corresponds to 29–356 (NQIQKLEESR…FYEKIYPKSN (328 aa)). Positions 83, 84, 85, 86, 87, and 88 each coordinate adenosine 3',5'-bisphosphate. N-linked (GlcNAc...) asparagine glycosylation is found at N108 and N127. Residues H140 and H142 contribute to the active site. Residues R164 and S172 each coordinate adenosine 3',5'-bisphosphate. 2 disulfides stabilise this stretch: C201–C209 and C222–C228. Adenosine 3',5'-bisphosphate is bound by residues Y279, S285, T290, and K293.

This sequence belongs to the sulfotransferase 3 family. In terms of assembly, homotrimer. Interacts with the C5-epimerase GLCE. Post-translationally, N-glycosylated.

It localises to the golgi apparatus membrane. Catalyzes the transfer of a sulfo group from 3'-phospho-5'-adenylyl sulfate (PAPS) to the 2-OH position of iduronic acid (IdoA) or glucuronic acid (GlcA) within the heparan sulfate (HS) chain and participates in HS biosynthesis. Required for metanephric development of kidney formation, suggesting that 2-O-sulfation within HS is essential for signaling between ureteric bud and metanephric mesenchyme. The chain is Heparan sulfate 2-O-sulfotransferase 1 from Homo sapiens (Human).